Consider the following 192-residue polypeptide: 7-methyl-GTP pyrophosphatase (192 aa).

Asp69 functions as the Proton acceptor in the catalytic mechanism.

It belongs to the Maf family. YceF subfamily. A divalent metal cation is required as a cofactor.

The protein resides in the cytoplasm. It catalyses the reaction N(7)-methyl-GTP + H2O = N(7)-methyl-GMP + diphosphate + H(+). Functionally, nucleoside triphosphate pyrophosphatase that hydrolyzes 7-methyl-GTP (m(7)GTP). May have a dual role in cell division arrest and in preventing the incorporation of modified nucleotides into cellular nucleic acids. The chain is 7-methyl-GTP pyrophosphatase from Methylobacillus flagellatus (strain ATCC 51484 / DSM 6875 / VKM B-1610 / KT).